We begin with the raw amino-acid sequence, 284 residues long: MTDSSSASDPTAGPVDPGPAPSAPDPALEDPASTPANGHHPNQADSFNMEQQMKIGEPEDNAGLLESSMRLKPHEAQSYRKKALWVSWVSIVVTMILAIAAFTVSIMRHSASAFGFAFDATLDVLSSIIVLWRYSNAAAVHSAHREYIACVILGVVFILSAITILVKAIHDLATKLEPEVDDFLYSVSVISGVVCTVLCVCKFMLGKVLTSRALITDGFNSLVGGVMGFSILISAEVFKHEPSVWFLDGTIGILIGLIILAYGVKLLKDMVPRIRQTRHYERFE.

Residues 1–44 form a disordered region; sequence MTDSSSASDPTAGPVDPGPAPSAPDPALEDPASTPANGHHPNQA. At 1 to 83 the chain is on the cytoplasmic side; it reads MTDSSSASDP…HEAQSYRKKA (83 aa). Residues 84-104 traverse the membrane as a helical segment; it reads LWVSWVSIVVTMILAIAAFTV. At 105-111 the chain is on the extracellular side; the sequence is SIMRHSA. Residues 112–132 traverse the membrane as a helical segment; sequence SAFGFAFDATLDVLSSIIVLW. The Cytoplasmic portion of the chain corresponds to 133–145; that stretch reads RYSNAAAVHSAHR. A helical transmembrane segment spans residues 146-166; sequence EYIACVILGVVFILSAITILV. Residues 167–182 lie on the Extracellular side of the membrane; the sequence is KAIHDLATKLEPEVDD. A helical transmembrane segment spans residues 183 to 203; it reads FLYSVSVISGVVCTVLCVCKF. Over 204–212 the chain is Cytoplasmic; it reads MLGKVLTSR. The helical transmembrane segment at 213–233 threads the bilayer; it reads ALITDGFNSLVGGVMGFSILI. At 234–243 the chain is on the extracellular side; that stretch reads SAEVFKHEPS. Residues 244–264 form a helical membrane-spanning segment; it reads VWFLDGTIGILIGLIILAYGV. Residues 265–284 lie on the Cytoplasmic side of the membrane; the sequence is KLLKDMVPRIRQTRHYERFE.

The protein belongs to the TMEM163 family.

The protein resides in the cytoplasmic vesicle. It localises to the secretory vesicle. It is found in the synaptic vesicle membrane. The protein localises to the early endosome membrane. Its subcellular location is the late endosome membrane. The protein resides in the lysosome membrane. It localises to the cell membrane. The catalysed reaction is Zn(2+)(in) = Zn(2+)(out). In terms of biological role, zinc ion transporter that mediates zinc efflux and plays a crucial role in intracellular zinc homeostasis. Binds the divalent cations Zn(2+), Ni(2+), and to a minor extent Cu(2+). Is a functional modulator of P2X purinoceptors, including P2RX1, P2RX3, P2RX4 and P2RX7. Plays a role in central nervous system development and is required for myelination, and survival and proliferation of oligodendrocytes. This Danio rerio (Zebrafish) protein is Transmembrane protein 163b.